The sequence spans 186 residues: ATP synthase subunit delta (186 aa).

It belongs to the ATPase delta chain family. F-type ATPases have 2 components, F(1) - the catalytic core - and F(0) - the membrane proton channel. F(1) has five subunits: alpha(3), beta(3), gamma(1), delta(1), epsilon(1). F(0) has three main subunits: a(1), b(2) and c(10-14). The alpha and beta chains form an alternating ring which encloses part of the gamma chain. F(1) is attached to F(0) by a central stalk formed by the gamma and epsilon chains, while a peripheral stalk is formed by the delta and b chains.

The protein localises to the cell inner membrane. In terms of biological role, f(1)F(0) ATP synthase produces ATP from ADP in the presence of a proton or sodium gradient. F-type ATPases consist of two structural domains, F(1) containing the extramembraneous catalytic core and F(0) containing the membrane proton channel, linked together by a central stalk and a peripheral stalk. During catalysis, ATP synthesis in the catalytic domain of F(1) is coupled via a rotary mechanism of the central stalk subunits to proton translocation. Functionally, this protein is part of the stalk that links CF(0) to CF(1). It either transmits conformational changes from CF(0) to CF(1) or is implicated in proton conduction. The polypeptide is ATP synthase subunit delta (Azorhizobium caulinodans (strain ATCC 43989 / DSM 5975 / JCM 20966 / LMG 6465 / NBRC 14845 / NCIMB 13405 / ORS 571)).